The primary structure comprises 153 residues: Mediator of RNA polymerase II transcription subunit 22 (153 aa).

Belongs to the Mediator complex subunit 22 family. In terms of assembly, component of the Mediator complex.

It is found in the nucleus. Its function is as follows. Component of the Mediator complex, a coactivator involved in the regulated transcription of nearly all RNA polymerase II-dependent genes. Mediator functions as a bridge to convey information from gene-specific regulatory proteins to the basal RNA polymerase II transcription machinery. Mediator is recruited to promoters by direct interactions with regulatory proteins and serves as a scaffold for the assembly of a functional preinitiation complex with RNA polymerase II and the general transcription factors. The polypeptide is Mediator of RNA polymerase II transcription subunit 22 (mdt-22) (Caenorhabditis briggsae).